The primary structure comprises 335 residues: 4-hydroxy-3-methylbut-2-enyl diphosphate reductase (335 aa).

C14 is a binding site for [4Fe-4S] cluster. 2 residues coordinate (2E)-4-hydroxy-3-methylbut-2-enyl diphosphate: H43 and H81. Dimethylallyl diphosphate-binding residues include H43 and H81. Positions 43 and 81 each coordinate isopentenyl diphosphate. C103 is a binding site for [4Fe-4S] cluster. Residue H132 participates in (2E)-4-hydroxy-3-methylbut-2-enyl diphosphate binding. H132 lines the dimethylallyl diphosphate pocket. Isopentenyl diphosphate is bound at residue H132. E134 acts as the Proton donor in catalysis. (2E)-4-hydroxy-3-methylbut-2-enyl diphosphate is bound at residue T179. C209 contributes to the [4Fe-4S] cluster binding site. Positions 237, 238, 239, and 285 each coordinate (2E)-4-hydroxy-3-methylbut-2-enyl diphosphate. Positions 237, 238, 239, and 285 each coordinate dimethylallyl diphosphate. Isopentenyl diphosphate contacts are provided by S237, S238, N239, and S285.

It belongs to the IspH family. It depends on [4Fe-4S] cluster as a cofactor.

The enzyme catalyses isopentenyl diphosphate + 2 oxidized [2Fe-2S]-[ferredoxin] + H2O = (2E)-4-hydroxy-3-methylbut-2-enyl diphosphate + 2 reduced [2Fe-2S]-[ferredoxin] + 2 H(+). It catalyses the reaction dimethylallyl diphosphate + 2 oxidized [2Fe-2S]-[ferredoxin] + H2O = (2E)-4-hydroxy-3-methylbut-2-enyl diphosphate + 2 reduced [2Fe-2S]-[ferredoxin] + 2 H(+). It functions in the pathway isoprenoid biosynthesis; dimethylallyl diphosphate biosynthesis; dimethylallyl diphosphate from (2E)-4-hydroxy-3-methylbutenyl diphosphate: step 1/1. The protein operates within isoprenoid biosynthesis; isopentenyl diphosphate biosynthesis via DXP pathway; isopentenyl diphosphate from 1-deoxy-D-xylulose 5-phosphate: step 6/6. In terms of biological role, catalyzes the conversion of 1-hydroxy-2-methyl-2-(E)-butenyl 4-diphosphate (HMBPP) into a mixture of isopentenyl diphosphate (IPP) and dimethylallyl diphosphate (DMAPP). Acts in the terminal step of the DOXP/MEP pathway for isoprenoid precursor biosynthesis. The chain is 4-hydroxy-3-methylbut-2-enyl diphosphate reductase from Deinococcus radiodurans (strain ATCC 13939 / DSM 20539 / JCM 16871 / CCUG 27074 / LMG 4051 / NBRC 15346 / NCIMB 9279 / VKM B-1422 / R1).